The primary structure comprises 152 residues: Protein SprT-like (152 aa).

The SprT-like domain occupies 7–147 (QRLVEEVSLQ…CGKCKGKLKP (141 aa)). Residue H67 participates in Zn(2+) binding. The active site involves E68. Residue H71 coordinates Zn(2+).

Belongs to the SprT family. Zn(2+) is required as a cofactor.

It localises to the cytoplasm. The sequence is that of Protein SprT-like from Bacillus cereus (strain ATCC 14579 / DSM 31 / CCUG 7414 / JCM 2152 / NBRC 15305 / NCIMB 9373 / NCTC 2599 / NRRL B-3711).